The following is a 210-amino-acid chain: ATP-dependent Clp protease proteolytic subunit (210 aa).

The active-site Nucleophile is the Ser106. His131 is an active-site residue.

This sequence belongs to the peptidase S14 family. As to quaternary structure, fourteen ClpP subunits assemble into 2 heptameric rings which stack back to back to give a disk-like structure with a central cavity, resembling the structure of eukaryotic proteasomes.

It localises to the cytoplasm. It catalyses the reaction Hydrolysis of proteins to small peptides in the presence of ATP and magnesium. alpha-casein is the usual test substrate. In the absence of ATP, only oligopeptides shorter than five residues are hydrolyzed (such as succinyl-Leu-Tyr-|-NHMec, and Leu-Tyr-Leu-|-Tyr-Trp, in which cleavage of the -Tyr-|-Leu- and -Tyr-|-Trp bonds also occurs).. In terms of biological role, cleaves peptides in various proteins in a process that requires ATP hydrolysis. Has a chymotrypsin-like activity. Plays a major role in the degradation of misfolded proteins. In Bartonella tribocorum (strain CIP 105476 / IBS 506), this protein is ATP-dependent Clp protease proteolytic subunit.